The primary structure comprises 299 residues: MGRTPCCDKIGLKKGPWTPEEDEVLVAHIKKNGHGSWRTLPKLAGLLRCGKSCRLRWTNYLRPDIKRGPFTADEEKLVIQLHAILGNRWAAIAAQLPGRTDNEIKNLWNTHLKKRLLSMGLDPRTHEPLPSYGLAKQAPSSPTTRHMAQWESARVEAEARLSRESMLFSPSFYSGVVKTECDHFLRIWNSEIGEAFRNLAPLDESTITSQSPCSRATSTSSALLKSSTNSWGGKEVTVAIHGSDYSPYSNDLEDDSTDSALQLLLDFPISDDDMSFLEENIDSYSQAPPIGLVSMVSKF.

2 HTH myb-type domains span residues 9-61 and 62-116; these read KIGL…TNYL and RPDI…KKRL. 2 DNA-binding regions (H-T-H motif) span residues 37 to 61 and 89 to 112; these read WRTLPKLAGLLRCGKSCRLRWTNYL and WAAIAAQLPGRTDNEIKNLWNTHL.

As to quaternary structure, interacts with LFY. Expressed in the shoot apex, young flower buds, developing carpels and siliques. Expressed in floral meristem, initiating floral primordia and developing flowers.

Its subcellular location is the nucleus. Its function is as follows. Transcription factor that may play a role in flower development by repressing ANT. Regulates the transition of meristem identity from vegetative growth to flowering. Acts downstream of LFY and upstream of AP1. Directly activates AP1 to promote floral fate. Together with LFY and AP1 may constitute a regulatory network that contributes to an abrupt and robust meristem identity transition. The protein is Transcription factor MYB17 of Arabidopsis thaliana (Mouse-ear cress).